The following is a 944-amino-acid chain: snRNA-activating protein complex subunit 4 homolog (944 aa).

Residues 1–22 (MSDLVMFEPGASTSTDVPTNTD) form a disordered region. The span at 11–22 (ASTSTDVPTNTD) shows a compositional bias: polar residues. The region spanning 177–244 (TSNFDRRQWT…AVKSKWYNEL (68 aa)) is the Myb-like 1 domain. The HTH myb-type 1 domain occupies 245-301 (NPKWNKEHWSNEEVEKLKYLRESPKFVSWPMLALNLGTNRTSYQCMEKYKTEVSQHS). Residues 273 to 297 (WPMLALNLGTNRTSYQCMEKYKTEV) constitute a DNA-binding region (H-T-H motif). The 47-residue stretch at 304–350 (WSQDEDTKLIALTKITSINGHIQWDKVAQCMPGRTRQQVRTRFSHTL) folds into the Myb-like 2 domain. HTH myb-type domains follow at residues 351 to 406 (DASV…NRSA) and 407 to 459 (HVNE…AAKL). 2 consecutive DNA-binding regions (H-T-H motif) follow at residues 379 to 402 (WAKV…TNVL) and 432 to 455 (WAKC…LQLI). Positions 911-921 (ARPARPPRSSA) are enriched in low complexity. The tract at residues 911–935 (ARPARPPRSSAGTPTPSHVSIDTES) is disordered. Residues 922-935 (GTPTPSHVSIDTES) are compositionally biased toward polar residues.

As to expression, broadly expressed in all tissues, including head, vulva and tail.

The protein resides in the nucleus. Functionally, binds to the promoter regions of RNA polymerase II and III small-nuclear RNA genes, type 3 RNA polymerase III non-coding RNA genes, small nucleolar RNAs and transfer RNA genes. Required for expression of mature 21U-RNAs. The sequence is that of snRNA-activating protein complex subunit 4 homolog from Caenorhabditis elegans.